Consider the following 605-residue polypeptide: MMIDMFTGLKRSHRGGDLRIDHAGQTVTLMGWVQRRRDHGGLIFVDLRDRSGLVQVVFSPEVGKEAFTKAEDVRNEYVLAVTGDVRPRPEGTVNANLPSGQIDVYARQLWVLNSAKTPPFYIEDGVDVDETVRLKYRYLDLRRPEMQRNLIIRHKTAKAMRDFLDRNGFLEIETPMLTKSTPEGAREFMVPSRIHPGEFFVLPQSPQLYKQILMVAGMERYFQIVRCFRDEDLRADRQPEFTQLDIEMSFTQMDDLLTLMEEMVAHIFKEALGKEISTPFRRIPYAEAMGRFGSDKPDLRFGLELIDLTETVKDVEFKVFASVVKGGGEVKAINAKGCAHFSRKEIDDLTKGVAVYGAKGLAYIQMTEEGPKSPIAKFFTDEQLNAVLDRLGAEKGDLLLFVADKPSVVAASLGFLRQELARRLNLIDSEKLEFAWVVDFPLVEYDPEEKRYNAIHHPFTAPKDEDLDLLDKEPGKVRAKAYDLVLNGVELGGGSLRIYRRDIQEKMFAILGLTAEEAYQKFGFLLDAFDYGTPPHGGIAFGLDRMIMLMTGRDTIRDVIAFPKTQSASDMMVDAPSAVTPRQLKELHIKLDLPVKAPKAEPAKK.

An L-aspartate-binding site is contributed by glutamate 183. An aspartate region spans residues 207 to 210; the sequence is QLYK. Arginine 229 serves as a coordination point for L-aspartate. Residues 229–231 and glutamine 238 contribute to the ATP site; that span reads RDE. L-aspartate is bound at residue histidine 456. Glutamate 490 provides a ligand contact to ATP. Arginine 497 is a binding site for L-aspartate. 542-545 is an ATP binding site; sequence GLDR.

It belongs to the class-II aminoacyl-tRNA synthetase family. Type 1 subfamily. As to quaternary structure, homodimer.

The protein resides in the cytoplasm. It catalyses the reaction tRNA(Asx) + L-aspartate + ATP = L-aspartyl-tRNA(Asx) + AMP + diphosphate. Aspartyl-tRNA synthetase with relaxed tRNA specificity since it is able to aspartylate not only its cognate tRNA(Asp) but also tRNA(Asn). Reaction proceeds in two steps: L-aspartate is first activated by ATP to form Asp-AMP and then transferred to the acceptor end of tRNA(Asp/Asn). This chain is Aspartate--tRNA(Asp/Asn) ligase, found in Heliobacterium modesticaldum (strain ATCC 51547 / Ice1).